The chain runs to 625 residues: MNANLAHQPPQGRLSLLALSALGIVFGDIGTSPLYTFKTILGTGGQPTGAAAVLGALSLVIWTLFIITTVKYVMFAMRVDNDGEGGILALMALLGVKRQRRPTIVALGLFGAALIYGDGAITPAISVLSALEGLNMAAPALQPYVVPAAVVILLALFAIQSRGTASIGRLFGPVMLLWFVTIAVLGLVGIARHPTVFAAINPSYGLSYLVSNGATGFLVLGSVFLCVTGAEALYADMGHFGAGPIKLAWFAVVFPSLIINYAGQAALVIDGAPTDGNIFFRLCPDGLLLPLIGLATLATIIASQSVITGAFSMTRQAIQLGWMPRLAIKQTSSEGYGQIYVGAVNWLLMLVTVSLTIGFGKSDNLASAYGIAVSLTMLMTSALLFIAMREIWQWSLLAAGAVAGVFLTIDSAFFLANLTKIAEGGYVPLLLATSVYGLMWIWHRGAAAVAERMRERLIPVAQFMADIAEKKVPRVPGTAVFLTRTERGAPPVMLWHVKHNRALHEHLLVLRVEVISIPWVAPDDRLKIEELAPNVWRAEATFGFMERPHIPELLKASKARGCRIDLDDITYYVGHETVTARDDGKGLPAWQEQLFAAMERNSLHVSDFFSLPRDSVVEIGRQVAI.

The next 12 membrane-spanning stretches (helical) occupy residues Leu14–Leu34, Ala50–Val70, Ile104–Ala124, Pro139–Ile159, Leu170–Ile190, Gly213–Leu233, Trp249–Ile269, Leu287–Ile307, Ile339–Phe359, Ala368–Met388, Leu396–Ala416, and Ile421–Ile441.

This sequence belongs to the HAK/KUP transporter (TC 2.A.72) family.

It localises to the cell inner membrane. The catalysed reaction is K(+)(in) + H(+)(in) = K(+)(out) + H(+)(out). Functionally, transport of potassium into the cell. Likely operates as a K(+):H(+) symporter. The sequence is that of Probable potassium transport system protein Kup 1 from Bradyrhizobium sp. (strain ORS 278).